Reading from the N-terminus, the 7067-residue chain is Replicase polyprotein 1ab (7067 aa).

Residues 12 to 127 (THVQLSLPVL…YRNVLLRKNG (116 aa)) form the CoV Nsp1 globular domain. Residues 148 to 179 (ELGTDPIEDYEQNWNTKHGSGALRELTRELNG) form the BetaCoV Nsp1 C-terminal domain. A CoV Nsp2 N-terminal domain is found at 183 to 456 (TRYVDNNFCG…NEDLLEILNR (274 aa)). 12 residues coordinate Zn(2+): C200, C231, H234, H236, C323, C326, C341, C344, C370, C373, H382, and C416. The C2H2 stretch occupies residues 200-236 (CIKDFLARAGKSMCTLSEQLDYIESKRGVYCCREHEH). The segment at 323 to 344 (CNHCDEVSWQTCDFLKATCEQC) is C4. Positions 370 to 416 (CPACQDPEVGPEHSVADYHNHSNIETRLRKGGRTKCFGGCVFSYVGC) are C2HC. The CoV Nsp2 middle domain maps to 458-688 (RVNINIVGDF…LGVVNKALEM (231 aa)). A CoV Nsp2 C-terminal domain is found at 690–818 (LDQVTIAGTK…TNNVFRLKGG (129 aa)). Residues 822–930 (KGVTFGEDTV…MYCSFYPPDE (109 aa)) form the Ubiquitin-like 1 domain. Macro domains follow at residues 998–1164 (VNQF…LDYL), 1201–1329 (KIKA…LPSE), and 1337–1464 (VLGT…TSSS). Residues 1466–1532 (TPEEYFVETT…PLDKLKSLLS (67 aa)) enclose the DPUP domain. The Ubiquitin-like 2 domain maps to 1536–1591 (VKTIKVFTTVDNTNLHTHIVDMSMTYGQQFGPTYLDGADVTKIKPHVNHEGKTFFV). The Peptidase C16 domain occupies 1605 to 1869 (YYHTIDESFL…YTEIEPKLDG (265 aa)). The For PL-PRO activity role is filled by C1645. Residues C1723, C1726, C1758, and C1760 each coordinate Zn(2+). The segment at 1723–1760 (CKHCGQKTTTLKGVEAVMYMGTLSYDELKTGVSIPCVC) adopts a C4-type zinc-finger fold. Active-site for PL-PRO activity residues include H1806 and D1820. A Nucleic acid-binding domain is found at 1882 to 1992 (PIDLVPTQPM…CLWSTKPVDT (111 aa)). The G2M domain occupies 2017-2126 (TTSEEVVENP…LGQTAVITSN (110 aa)). The segment at 2086 to 2365 (LALGLKTLAT…IFFASFYYVW (280 aa)) is HD1. Residues 2197 to 2217 (LFTIVMWLLLLSICLGSLTYV) form a helical membrane-spanning segment. In terms of domain architecture, 3Ecto spans 2218–2288 (TAVLGVCLSS…QVTISSYKLD (71 aa)). Intrachain disulfides connect C2234–C2262 and C2253–C2259. The next 2 helical transmembrane spans lie at 2298–2318 (WLLA…SAIM) and 2345–2365 (MAPV…YYVW). Positions 2366 to 2456 (KSYVHIMDGC…QFKRPINPTD (91 aa)) are Y1. Residues 2366–2734 (KSYVHIMDGC…ITTKISLKGG (369 aa)) form the CoV Nsp3 Y domain. H2370, C2375, C2380, C2383, C2416, H2419, C2423, and C2426 together coordinate Zn(2+). Residues 2370–2383 (HIMDGCTSSTCMMC) form a ZF1 region. Residues 2416–2426 (CKAHNWNCLNC) form a ZF2 region. The Y2 stretch occupies residues 2457–2551 (QSAYVVDSVT…LLDQALVSDV (95 aa)). Residues 2457 to 2734 (QSAYVVDSVT…ITTKISLKGG (278 aa)) are coV-Y. A Y3 region spans residues 2552–2633 (GDSTEVSVKM…ECLKLSHHSD (82 aa)). Residues 2634-2734 (IEVTGDSCNN…ITTKISLKGG (101 aa)) are Y4. 7 consecutive transmembrane segments (helical) span residues 2744–2764 (LLKV…IMPV), 2986–3006 (PGVF…TPLV), 3016–3036 (ASVV…YYFM), 3048–3068 (VVAA…LAPA), 3071–3091 (FLPG…TNDV), 3099–3119 (WFAM…VFCI), and 3136–3156 (VMFN…TFLL). Positions 2749-3156 (LLCVLAALFC…EEAALCTFLL (408 aa)) are HD2. One can recognise a Nsp4C domain in the interval 3136-3234 (VMFNGVTFST…QTSITSAVLQ (99 aa)). The region spanning 3235–3540 (SGFRKMAFPS…VRQCSGVTFQ (306 aa)) is the Peptidase C30 domain. Residues H3275 and C3379 each act as for 3CL-PRO activity in the active site. 7 helical membrane passes run 3558-3578 (FLTS…FFVY), 3580-3600 (NAFL…MLLV), 3606-3626 (FLCL…MVYM), 3652-3672 (DCVM…RTVY), 3679-3698 (VWTL…GNSL), 3722-3742 (IMFL…LLFI), and 3750-3770 (IMLV…LFCL). Positions 3558-3770 (FLTSLLILVQ…CCCYFGLFCL (213 aa)) are HD3. In terms of domain architecture, RdRp Nsp7 cofactor spans 3831 to 3913 (SKMSDVKCTS…EMLDNRATLQ (83 aa)). The region spanning 3914 to 4111 (AIASEFSSLP…LRANSAVKLQ (198 aa)) is the RdRp Nsp8 cofactor domain. The Nsp9 ssRNA-binding domain occupies 4112 to 4224 (NNELSPVALR…GSLAATVRLQ (113 aa)). Residues 4225–4363 (AGNATEVPAN…CDQLREPMMQ (139 aa)) enclose the ExoN/MTase coactivator domain. Zn(2+)-binding residues include C4298, C4301, H4307, C4314, C4341, C4344, C4352, and C4354. Zinc fingers lie at residues 4298 to 4314 (CLYC…KGFC) and 4341 to 4354 (CTVC…GCSC). In terms of domain architecture, NiRAN spans 4370–4624 (FLNRVCGVSA…AAESHMDADL (255 aa)). 2 residues coordinate Mn(2+): N4572 and D4581. Residues 4629–4727 (VKWDLLKYDF…HNQDVNLHSS (99 aa)) form the Nsp12 Interface domain. Residues H4658, C4664, C4669, C4673, and C4850 each coordinate Zn(2+). Residues 4728–5295 (RLSFKELLVY…AMYTPHTVLQ (568 aa)) form the Nsp12 RNA-dependent RNA polymerase domain. Positions 4730–4944 (SFKELLVYAA…HQKLLKSIAA (215 aa)) are rdRp Fingers N-ter. A rdRp Palm N-ter region spans residues 4945 to 4983 (TRGATVVIGTSKFYGGWHNMLKTVYSDVESPHLMGWDYP). The region spanning 4975 to 5137 (PHLMGWDYPK…CYNSNYAAQG (163 aa)) is the RdRp catalytic domain. Residues 4984–5042 (KCDRAMPNMLRIMASLILARKHSTCCNLSHRFYRLANECAQVLSEMVMCGGSLYVKPGG) form a rdRp Fingers C-ter region. Zn(2+)-binding residues include H5005, C5008, and C5009. The tract at residues 5043 to 5178 (TSSGDATTAY…TRGPHEFCSQ (136 aa)) is rdRp Palm C-ter. Catalysis depends on residues S5122, D5123, and D5124. The segment at 5179–5295 (HTMLVKQGDD…AMYTPHTVLQ (117 aa)) is rdRp Thumb. One can recognise a CV ZBD domain in the interval 5296–5408 (AVGACVLCNS…TDFNAIATCD (113 aa)). Positions 5300, 5303, 5311, 5314, 5321, 5324, 5328, 5334, 5345, 5350, 5367, and 5370 each coordinate Zn(2+). One can recognise a (+)RNA virus helicase ATP-binding domain in the interval 5552–5733 (NISNEFSSNV…MKTIGPDMFL (182 aa)). 5577-5584 (GPPGTGKS) is a binding site for ATP. The (+)RNA virus helicase C-terminal domain maps to 5734–5903 (GTCRRCPAEI…TLQAENVTGL (170 aa)). The region spanning 5968–6183 (MFITREEAIR…RCLAVHECFV (216 aa)) is the ExoN domain. Catalysis depends on residues D5986, E5988, and E6087. Residues C6103, C6106, C6122, H6125, H6153, C6157, and H6160 each contribute to the Zn(2+) site. Active-site residues include H6164 and D6169. Residue C6175 participates in Zn(2+) binding. Positions 6192 to 6423 (YPIIGDELKI…NLWNTFTKLQ (232 aa)) constitute an N7-MTase domain. 6227–6233 (DIGNPKA) contributes to the S-adenosyl-L-methionine binding site. A gpppA-binding region spans residues 6310–6324 (CDGGSLYVNKHAFHT). The Zn(2+) site is built by C6348, C6369, C6380, and H6383. The Nsp15 N-terminal oligomerization domain occupies 6424 to 6484 (SLENVAYNVV…NVAFELWAKR (61 aa)). In terms of domain architecture, AV-Nsp11N/CoV-Nsp15M spans 6485–6610 (NIKPVPEIKI…YFKKVDGIIQ (126 aa)). The NendoU domain occupies 6627-6766 (KPRSQMETDF…KDGHVETFYP (140 aa)). Active-site residues include H6657, H6672, K6712, K6815, D6899, K6939, and E6972. The region spanning 6771–7065 (SQAWQPGVAM…RVVVSSDILV (295 aa)) is the Nidovirus-type SAM-dependent 2'-O-MTase domain.

This sequence belongs to the coronaviruses polyprotein 1ab family. In terms of assembly, interacts with host PHB and PHB2. As to quaternary structure, interacts with papain-like protease nsp3 and non-structural protein 6. Monomer. Homodimer. Only the homodimer shows catalytic activity. In terms of assembly, interacts with nsp8 and nsp12 to form the replication-transcription complex (RTC): nsp12, nsp7, two subunits of nsp8, and up to two subunits of nsp13. As to quaternary structure, interacts with nsp7, nsp13 and nsp12 to form the replication-transcription complex (RTC): nsp12, nsp7, two subunits of nsp8, and up to two subunits of nsp13. Interacts with nsp12. In terms of assembly, interacts with proofreading exoribonuclease nsp14 and 2'-O-methyltransferase nsp16; these interactions enhance nsp14 and nsp16 enzymatic activities. As to quaternary structure, interacts with nsp7 and nsp8 to form the replication-transcription complex (RTC): nsp12, nsp7, two subunits of nsp8, and up to two subunits of nsp13. Interacts with nsp9. Interacts with nsp8 to form the replication-transcription complex (RTC): nsp12, nsp7, two subunits of nsp8, and up to two subunits of nsp13. Requires Mn(2+) as cofactor. It depends on Mg(2+) as a cofactor. In terms of processing, specific enzymatic cleavages in vivo by its own proteases yield mature proteins. 3CL-PRO and PL-PRO proteinases are autocatalytically processed.

The protein localises to the host membrane. It is found in the host cytoplasm. The protein resides in the host perinuclear region. Its subcellular location is the host endoplasmic reticulum-Golgi intermediate compartment. It catalyses the reaction RNA(n) + a ribonucleoside 5'-triphosphate = RNA(n+1) + diphosphate. It carries out the reaction ATP + H2O = ADP + phosphate + H(+). The catalysed reaction is Thiol-dependent hydrolysis of ester, thioester, amide, peptide and isopeptide bonds formed by the C-terminal Gly of ubiquitin (a 76-residue protein attached to proteins as an intracellular targeting signal).. The enzyme catalyses a 5'-end (N(7)-methyl 5'-triphosphoguanosine)-ribonucleoside in mRNA + S-adenosyl-L-methionine = a 5'-end (N(7)-methyl 5'-triphosphoguanosine)-(2'-O-methyl-ribonucleoside) in mRNA + S-adenosyl-L-homocysteine + H(+). It catalyses the reaction uridylyl-uridylyl-ribonucleotide-RNA = a 3'-end uridylyl-2',3'-cyclophospho-uridine-RNA + a 5'-end dephospho-ribonucleoside-RNA. It carries out the reaction a 5'-end diphospho-ribonucleoside in mRNA + GTP + H(+) = a 5'-end (5'-triphosphoguanosine)-ribonucleoside in mRNA + diphosphate. The catalysed reaction is a 5'-end (5'-triphosphoguanosine)-ribonucleoside in mRNA + S-adenosyl-L-methionine = a 5'-end (N(7)-methyl 5'-triphosphoguanosine)-ribonucleoside in mRNA + S-adenosyl-L-homocysteine. In terms of biological role, the replicase polyprotein of coronaviruses is a multifunctional protein: it contains the activities necessary for the transcription of negative stranded RNA, leader RNA, subgenomic mRNAs and progeny virion RNA as well as proteinases responsible for the cleavage of the polyprotein into functional products. Inhibits host translation by interacting with the 40S ribosomal subunit. The nsp1-40S ribosome complex further induces an endonucleolytic cleavage near the 5'UTR of host mRNAs, targeting them for degradation. Viral mRNAs are not susceptible to nsp1-mediated endonucleolytic RNA cleavage thanks to the presence of a 5'-end leader sequence and are therefore protected from degradation. By suppressing host gene expression, nsp1 facilitates efficient viral gene expression in infected cells and evasion from host immune response. Functionally, may play a role in the modulation of host cell survival signaling pathway by interacting with host PHB and PHB2. Indeed, these two proteins play a role in maintaining the functional integrity of the mitochondria and protecting cells from various stresses. Its function is as follows. Responsible for the cleavages located at the N-terminus of the replicase polyprotein. In addition, PL-PRO possesses a deubiquitinating/deISGylating activity and processes both 'Lys-48'- and 'Lys-63'-linked polyubiquitin chains from cellular substrates. Participates together with nsp4 in the assembly of virally-induced cytoplasmic double-membrane vesicles necessary for viral replication. Antagonizes innate immune induction of type I interferon by blocking the phosphorylation, dimerization and subsequent nuclear translocation of host IRF3. Also prevents host NF-kappa-B signaling. In terms of biological role, participates in the assembly of virally-induced cytoplasmic double-membrane vesicles necessary for viral replication. Cleaves the C-terminus of replicase polyprotein at 11 sites. Recognizes substrates containing the core sequence [ILMVF]-Q-|-[SGACN]. Also able to bind an ADP-ribose-1''-phosphate (ADRP). Functionally, plays a role in the initial induction of autophagosomes from host endoplasmic reticulum. Later, limits the expansion of these phagosomes that are no longer able to deliver viral components to lysosomes. Its function is as follows. Forms a hexadecamer with nsp8 (8 subunits of each) that may participate in viral replication by acting as a primase. Alternatively, may synthesize substantially longer products than oligonucleotide primers. In terms of biological role, forms a hexadecamer with nsp7 (8 subunits of each) that may participate in viral replication by acting as a primase. Alternatively, may synthesize substantially longer products than oligonucleotide primers. Forms a primer, NSP9-pU, which is utilized by the polymerase for the initiation of RNA chains. Interacts with ribosome signal recognition particle RNA (SRP). Together with NSP8, suppress protein integration into the cell membrane, thereby disrupting host immune defenses. Functionally, plays a pivotal role in viral transcription by stimulating both nsp14 3'-5' exoribonuclease and nsp16 2'-O-methyltransferase activities. Therefore plays an essential role in viral mRNAs cap methylation. Its function is as follows. RNA-directed RNA polymerase that catalyzes the transcription of viral genomic and subgenomic RNAs. Acts in complex with nsp7 and nsp8 to transcribe both the minus and positive strands of genomic RNA. The kinase-like NiRAN domain of NSP12 attaches one or more nucleotides to the amino terminus of NSP9, forming a covalent RNA-protein intermediate that serves as transcription/replication primer. Subgenomic RNAs (sgRNAs) are formed by discontinuous transcription: The polymerase has the ability to pause at transcription-regulating sequences (TRS) and jump to the leader TRS, resulting in a major deletion. This creates a series of subgenomic RNAs that are replicated, transcribed and translated. In addition, Nsp12 is a subunit of the viral RNA capping enzyme that catalyzes the RNA guanylyltransferase reaction for genomic and sub-genomic RNAs. Subsequently, the NiRAN domain transfers RNA to GDP, and forms the core cap structure GpppA-RNA. In terms of biological role, multi-functional protein with a zinc-binding domain in N-terminus displaying RNA and DNA duplex-unwinding activities with 5' to 3' polarity. Activity of helicase is dependent on magnesium. Plays a role in viral RNA synthesis through two distinct activities. The N7-guanine methyltransferase activity plays a role in the formation of the cap structure GpppA-RNA. The proofreading exoribonuclease reduces the sensitivity of the virus to RNA mutagens during replication. This activity acts on both ssRNA and dsRNA in a 3'-5' direction. Functionally, plays a role in viral transcription/replication and prevents the simultaneous activation of host cell dsRNA sensors, such as MDA5/IFIH1, OAS, and PKR. Acts by degrading the 5'-polyuridines generated during replication of the poly(A) region of viral genomic and subgenomic RNAs. Catalyzes a two-step reaction in which a 2'3'-cyclic phosphate (2'3'-cP) is first generated by 2'-O transesterification, which is then hydrolyzed to a 3'-phosphate (3'-P). If not degraded, poly(U) RNA would hybridize with poly(A) RNA tails and activate host dsRNA sensors. Its function is as follows. Methyltransferase that mediates mRNA cap 2'-O-ribose methylation to the 5'-cap structure of viral mRNAs. N7-methyl guanosine cap is a prerequisite for binding of nsp16. Therefore plays an essential role in viral mRNAs cap methylation which is essential to evade immune system. In Bat coronavirus HKU3 (BtCoV), this protein is Replicase polyprotein 1ab (rep).